We begin with the raw amino-acid sequence, 68 residues long: uncharacterized protein (68 aa).

The helical transmembrane segment at 24 to 44 (AHICKCIAMFFVVAGVVLMFF) threads the bilayer.

Its subcellular location is the endoplasmic reticulum. It localises to the membrane. This is an uncharacterized protein from Saccharomyces cerevisiae (strain ATCC 204508 / S288c) (Baker's yeast).